We begin with the raw amino-acid sequence, 79 residues long: Hematopoietic cell signal transducer (79 aa).

The N-terminal stretch at Met-1–Ala-18 is a signal peptide. Residues Gln-19 to Leu-35 lie on the Extracellular side of the membrane. A helical membrane pass occupies residues Leu-36–Val-56. The Cytoplasmic segment spans residues Cys-57 to Gly-79. Tyr-72 bears the Phosphotyrosine mark. The tract at residues Tyr-72–Asn-74 is GRB2 binding site. Residues Tyr-72–Met-75 form a PIK3R1 binding site region.

This sequence belongs to the DAP10 family. As to quaternary structure, homodimer; Disulfide-linked. Heterohexamer composed of four subunits of HCST/DAP10 and two subunits of KLRK1. Interacts (via transmembrane domain) with KLRK1 (via transmembrane domain); the interaction is required for KLRK1 NK cell surface and induces NK cell-mediated cytotoxicity. Interacts with PIK3R1 and GRB2. Interacts with CLEC5A. Forms an CLEC5A/TYROBP/HCST trimolecular complex depending almost solely on TYROBP. Interacts with KLRK1. Interacts with CD300H. Phosphorylated; PIK3R1 and GRB2 associate specifically with tyrosine-phosphorylated HCST. In terms of processing, O-glycosylated.

It is found in the membrane. In terms of biological role, transmembrane adapter protein which associates with KLRK1 to form an activation receptor KLRK1-HCST in lymphoid and myeloid cells; this receptor plays a major role in triggering cytotoxicity against target cells expressing cell surface ligands such as MHC class I chain-related MICA and MICB, and UL16-binding proteins (ULBPs); these ligands are up-regulated by stress conditions and pathological state such as viral infection and tumor transformation. Functions as a docking site for PI3-kinase PIK3R1 and GRB2. Interaction of ULBPs with KLRK1-HCST triggers calcium mobilization and activation of the PIK3R1, MAP2K/ERK, and JAK2/STAT5 signaling pathways. Both PIK3R1 and GRB2 are required for full KLRK1-HCST-mediated activation and ultimate killing of target cells. In NK cells, KLRK1-HCST signaling directly induces cytotoxicity and enhances cytokine production initiated via DAP12/TYROBP-associated receptors. In T-cells, it provides primarily costimulation for TCR-induced signals. KLRK1-HCST receptor plays a role in immune surveillance against tumors and is required for cytolysis of tumors cells; indeed, melanoma cells that do not express KLRK1 ligands escape from immune surveillance mediated by NK cells. The chain is Hematopoietic cell signal transducer (HCST) from Bos taurus (Bovine).